The chain runs to 192 residues: Cytidylate kinase (192 aa).

12–20 is a binding site for ATP; it reads GLAGSGTTT.

Belongs to the cytidylate kinase family. Type 2 subfamily.

It localises to the cytoplasm. The enzyme catalyses CMP + ATP = CDP + ADP. The catalysed reaction is dCMP + ATP = dCDP + ADP. The polypeptide is Cytidylate kinase (Pyrococcus furiosus (strain ATCC 43587 / DSM 3638 / JCM 8422 / Vc1)).